The following is a 390-amino-acid chain: Galactokinase (390 aa).

Position 33 to 36 (Glu33 to Asp36) interacts with substrate. Residues Ser67 and Gly124–Ser130 each bind ATP. 2 residues coordinate Mg(2+): Ser130 and Glu162. Asp174 acts as the Proton acceptor in catalysis. Substrate is bound at residue Tyr224.

This sequence belongs to the GHMP kinase family. GalK subfamily.

The protein localises to the cytoplasm. It catalyses the reaction alpha-D-galactose + ATP = alpha-D-galactose 1-phosphate + ADP + H(+). Its pathway is carbohydrate metabolism; galactose metabolism. Functionally, catalyzes the transfer of the gamma-phosphate of ATP to D-galactose to form alpha-D-galactose-1-phosphate (Gal-1-P). In Bacillus subtilis (strain 168), this protein is Galactokinase.